The sequence spans 1003 residues: X-linked retinitis pigmentosa GTPase regulator (1003 aa).

RCC1 repeat units follow at residues 54 to 105 (NKLY…STEG), 106 to 158 (GKVY…LTED), 159 to 208 (GELF…VTTE), 209 to 261 (GQLY…LTEK), 262 to 313 (AVYT…ITDM), and 314 to 367 (GLMY…FATP). Serine 418 carries the phosphoserine modification. A disordered region spans residues 460 to 495 (TPEKEGLTQPEPDYFRDNMAKGKETDNSSATDSESL). Residues 472-485 (DYFRDNMAKGKETD) show a composition bias toward basic and acidic residues. Residues 486 to 495 (NSSATDSESL) show a composition bias toward polar residues. Serine 520 carries the phosphoserine modification. 4 disordered regions span residues 625–657 (FKAI…LAEM), 691–760 (ESKD…TDQN), 794–932 (LSEI…DVKK), and 968–1003 (AFKG…CTIL). Basic and acidic residues predominate over residues 693–715 (KDFVKDSRRNKQDVIFDSERESI). 2 stretches are compositionally biased toward acidic residues: residues 716–726 (EEPDSYLEGES) and 797–821 (IPEE…EANE). The segment covering 827–848 (AGKEEKEIEILSDDLTDRAEDH) has biased composition (basic and acidic residues). Residues 849–867 (EFSEDEEPEDMAEELDEDL) are compositionally biased toward acidic residues. Basic and acidic residues predominate over residues 882-896 (SLKKDETTKQEKRAI). A compositionally biased stretch (low complexity) spans 913 to 924 (SSSSEVLNDSES). The span at 978–989 (QNHMGQNHQDTS) shows a compositional bias: polar residues. Cysteine 1000 bears the Cysteine methyl ester mark. Cysteine 1000 carries S-geranylgeranyl cysteine lipidation. A propeptide spans 1001-1003 (TIL) (removed in mature form).

In terms of assembly, interacts with PDE6D. Interacts with RPGRIP1. Interacts with RPGRIP1L. PDE6D, RPGRIP1 and RPGRIP1L may compete for the same binding sites. Interacts with NPM1. Interacts with SMC1A and SMC3. Interacts with CEP290. Interacts with WHRN. Interacts with SPATA7. Interacts with RAB37 and RAB8A (in GDP-bound forms); functions as GEF for RAB37 and RAB8A. Post-translationally, prenylated. As to expression, isoform 1 is expressed exclusively in testis. Isoforms 2, 3 and 4 are widely expressed.

Its subcellular location is the golgi apparatus. The protein localises to the cell projection. It localises to the cilium. It is found in the cytoplasm. The protein resides in the cytoskeleton. Its subcellular location is the cilium basal body. The protein localises to the microtubule organizing center. It localises to the centrosome. It is found in the cilium axoneme. The protein resides in the flagellum axoneme. Functionally, acts as a guanine-nucleotide releasing factor (GEF) for RAB8A and RAB37 by promoting the conversion of inactive RAB-GDP to the active form RAB-GTP. GEF activity towards RAB8A may facilitate ciliary trafficking by modulating ciliary intracellular localization of RAB8A. GEF activity towards RAB37 maintains autophagic homeostasis and retinal function. Involved in photoreceptor integrity. May control cilia formation by regulating actin stress filaments and cell contractility. May be involved in microtubule organization and regulation of transport in primary cilia. May play a critical role in spermatogenesis and in intraflagellar transport processes. In Canis lupus familiaris (Dog), this protein is X-linked retinitis pigmentosa GTPase regulator (RPGR).